The following is an 875-amino-acid chain: Phosphoenolpyruvate carboxylase (875 aa).

Active-site residues include His137 and Lys542.

This sequence belongs to the PEPCase type 1 family. Mg(2+) serves as cofactor.

The enzyme catalyses oxaloacetate + phosphate = phosphoenolpyruvate + hydrogencarbonate. In terms of biological role, forms oxaloacetate, a four-carbon dicarboxylic acid source for the tricarboxylic acid cycle. In Pseudomonas putida (strain GB-1), this protein is Phosphoenolpyruvate carboxylase.